Consider the following 299-residue polypeptide: Acetylglutamate kinase (299 aa).

Residues 72–73, arginine 94, and asparagine 196 each bind substrate; that span reads GG.

Belongs to the acetylglutamate kinase family. ArgB subfamily.

It localises to the cytoplasm. It carries out the reaction N-acetyl-L-glutamate + ATP = N-acetyl-L-glutamyl 5-phosphate + ADP. The protein operates within amino-acid biosynthesis; L-arginine biosynthesis; N(2)-acetyl-L-ornithine from L-glutamate: step 2/4. In terms of biological role, catalyzes the ATP-dependent phosphorylation of N-acetyl-L-glutamate. The protein is Acetylglutamate kinase of Burkholderia cenocepacia (strain HI2424).